Reading from the N-terminus, the 97-residue chain is UPF0298 protein MGAS9429_Spy0329 (97 aa).

Belongs to the UPF0298 family.

The protein localises to the cytoplasm. The sequence is that of UPF0298 protein MGAS9429_Spy0329 from Streptococcus pyogenes serotype M12 (strain MGAS9429).